The primary structure comprises 558 residues: CTP synthase (558 aa).

Residues 1–267 form an amidoligase domain region; sequence MAKFVFVTGG…CLEMLDVLNL (267 aa). Ser13 provides a ligand contact to CTP. Ser13 is a UTP binding site. ATP is bound by residues 14–19 and Asp71; that span reads SIGKGI. Asp71 and Glu141 together coordinate Mg(2+). CTP contacts are provided by residues 148-150, 188-193, and Lys224; these read DIE and KTKPTQ. Residues 188 to 193 and Lys224 each bind UTP; that span reads KTKPTQ. The region spanning 292-534 is the Glutamine amidotransferase type-1 domain; sequence KVALVGKYVQ…IEAAQLRLPA (243 aa). Position 354 (Gly354) interacts with L-glutamine. Cys381 (nucleophile; for glutamine hydrolysis) is an active-site residue. Residues 382-385, Glu405, and Arg462 each bind L-glutamine; that span reads LGMQ. Residues His507 and Glu509 contribute to the active site. The interval 536–558 is disordered; the sequence is PDEALRRQSQTNISAQEQPSRIG. Residues 542–558 show a composition bias toward polar residues; it reads RQSQTNISAQEQPSRIG.

The protein belongs to the CTP synthase family. In terms of assembly, homotetramer.

It catalyses the reaction UTP + L-glutamine + ATP + H2O = CTP + L-glutamate + ADP + phosphate + 2 H(+). The catalysed reaction is L-glutamine + H2O = L-glutamate + NH4(+). The enzyme catalyses UTP + NH4(+) + ATP = CTP + ADP + phosphate + 2 H(+). The protein operates within pyrimidine metabolism; CTP biosynthesis via de novo pathway; CTP from UDP: step 2/2. With respect to regulation, allosterically activated by GTP, when glutamine is the substrate; GTP has no effect on the reaction when ammonia is the substrate. The allosteric effector GTP functions by stabilizing the protein conformation that binds the tetrahedral intermediate(s) formed during glutamine hydrolysis. Inhibited by the product CTP, via allosteric rather than competitive inhibition. In terms of biological role, catalyzes the ATP-dependent amination of UTP to CTP with either L-glutamine or ammonia as the source of nitrogen. Regulates intracellular CTP levels through interactions with the four ribonucleotide triphosphates. The chain is CTP synthase from Prochlorococcus marinus (strain MIT 9313).